Reading from the N-terminus, the 361-residue chain is Large ribosomal subunit protein uL3 (361 aa).

Residues 1–14 (MGRGGRRNPGRPRR) are compositionally biased toward basic residues. 2 disordered regions span residues 1 to 33 (MGRGGRRNPGRPRRGSLAFSPRKRASRPVPRIR) and 337 to 361 (TSQQGVRPKASEDEIVEQLGGPASA).

It belongs to the universal ribosomal protein uL3 family. In terms of assembly, part of the 50S ribosomal subunit. Forms a cluster with proteins L14 and L24e.

Functionally, one of the primary rRNA binding proteins, it binds directly near the 3'-end of the 23S rRNA, where it nucleates assembly of the 50S subunit. The protein is Large ribosomal subunit protein uL3 of Methanopyrus kandleri (strain AV19 / DSM 6324 / JCM 9639 / NBRC 100938).